Reading from the N-terminus, the 663-residue chain is DNA ligase 1 (663 aa).

Residues 30–34 and 78–79 each bind NAD(+); these read DAEYD and SL. Lys-105 serves as the catalytic N6-AMP-lysine intermediate. NAD(+) contacts are provided by Arg-126, Glu-161, and Lys-294. Residues Cys-389, Cys-392, Cys-407, and Cys-412 each coordinate Zn(2+). The region spanning 574 to 663 is the BRCT domain; sequence AAGAPLAGKT…WAQLIEAKLV (90 aa).

Belongs to the NAD-dependent DNA ligase family. LigA subfamily. The cofactor is Mg(2+). Mn(2+) serves as cofactor.

It carries out the reaction NAD(+) + (deoxyribonucleotide)n-3'-hydroxyl + 5'-phospho-(deoxyribonucleotide)m = (deoxyribonucleotide)n+m + AMP + beta-nicotinamide D-nucleotide.. In terms of biological role, DNA ligase that catalyzes the formation of phosphodiester linkages between 5'-phosphoryl and 3'-hydroxyl groups in double-stranded DNA using NAD as a coenzyme and as the energy source for the reaction. It is essential for DNA replication and repair of damaged DNA. In Nocardia farcinica (strain IFM 10152), this protein is DNA ligase 1.